The primary structure comprises 146 residues: Snaclec 5 (146 aa).

Positions 1–23 are cleaved as a signal peptide; the sequence is MGRFIFISFGLLVVFLSLSGTEA. Intrachain disulfides connect cysteine 25–cysteine 36, cysteine 53–cysteine 142, and cysteine 119–cysteine 134. One can recognise a C-type lectin domain in the interval 32 to 143; that stretch reads YEGHCYRVFD…CRNYGHFVCK (112 aa).

This sequence belongs to the snaclec family. As to quaternary structure, heterodimer; disulfide-linked. As to expression, expressed by the venom gland.

It is found in the secreted. Interferes with one step of hemostasis (modulation of platelet aggregation, or coagulation cascade, for example). In Echis pyramidum leakeyi (Leakey's carpet viper), this protein is Snaclec 5.